Here is a 119-residue protein sequence, read N- to C-terminus: Auxin-responsive protein SAUR78 (119 aa).

It belongs to the ARG7 family.

May be involved in the regulation of ethylene receptor signaling. Promotes cell expansion and plant growth. The sequence is that of Auxin-responsive protein SAUR78 from Arabidopsis thaliana (Mouse-ear cress).